We begin with the raw amino-acid sequence, 1295 residues long: Phosphoribosylformylglycinamidine synthase (1295 aa).

The disordered stretch occupies residues S302–P327. ATP-binding positions include G306–D317 and A677. Mg(2+) is bound by residues D678, E717, N721, and D884. S886 lines the ATP pocket. In terms of domain architecture, Glutamine amidotransferase type-1 spans V1042 to G1295. The Nucleophile role is filled by C1135. Residues H1260 and E1262 contribute to the active site.

It in the N-terminal section; belongs to the FGAMS family. In terms of assembly, monomer.

It localises to the cytoplasm. It carries out the reaction N(2)-formyl-N(1)-(5-phospho-beta-D-ribosyl)glycinamide + L-glutamine + ATP + H2O = 2-formamido-N(1)-(5-O-phospho-beta-D-ribosyl)acetamidine + L-glutamate + ADP + phosphate + H(+). It functions in the pathway purine metabolism; IMP biosynthesis via de novo pathway; 5-amino-1-(5-phospho-D-ribosyl)imidazole from N(2)-formyl-N(1)-(5-phospho-D-ribosyl)glycinamide: step 1/2. Phosphoribosylformylglycinamidine synthase involved in the purines biosynthetic pathway. Catalyzes the ATP-dependent conversion of formylglycinamide ribonucleotide (FGAR) and glutamine to yield formylglycinamidine ribonucleotide (FGAM) and glutamate. In Photorhabdus laumondii subsp. laumondii (strain DSM 15139 / CIP 105565 / TT01) (Photorhabdus luminescens subsp. laumondii), this protein is Phosphoribosylformylglycinamidine synthase.